The sequence spans 1401 residues: MAP kinase kinase kinase wis4 (1401 aa).

Disordered regions lie at residues 67–99 (HIPL…MSYT) and 176–205 (QDSI…NDFS). Composition is skewed to polar residues over residues 72-99 (PSHS…MSYT) and 176-191 (QDSI…NQSL). The Protein kinase domain maps to 1037–1306 (WQQGHFVRSG…AVDLLTHPWI (270 aa)). ATP-binding positions include 1043–1051 (VRSGMFGDV) and Lys-1066. Catalysis depends on Asp-1161, which acts as the Proton acceptor.

Belongs to the protein kinase superfamily. STE Ser/Thr protein kinase family. MAP kinase kinase kinase subfamily.

The enzyme catalyses L-seryl-[protein] + ATP = O-phospho-L-seryl-[protein] + ADP + H(+). It catalyses the reaction L-threonyl-[protein] + ATP = O-phospho-L-threonyl-[protein] + ADP + H(+). Its function is as follows. Involved in a signal transduction pathway that is activated in under conditions of heat shock, oxidative stress or limited nutrition. Unlike win1, it is not activated by changes in the osmolarity of the extracellular environment. Activates the wis1 MAP kinase kinase by phosphorylation. The chain is MAP kinase kinase kinase wis4 (wis4) from Schizosaccharomyces pombe (strain 972 / ATCC 24843) (Fission yeast).